We begin with the raw amino-acid sequence, 404 residues long: Argininosuccinate synthase (404 aa).

ATP-binding positions include Ala10 to Ser18 and Ala38. Tyr89 contributes to the L-citrulline binding site. Position 119 (Gly119) interacts with ATP. Thr121, Asn125, and Asp126 together coordinate L-aspartate. Position 125 (Asn125) interacts with L-citrulline. Arg129, Ser177, Ser186, Glu262, and Tyr274 together coordinate L-citrulline.

This sequence belongs to the argininosuccinate synthase family. Type 1 subfamily. As to quaternary structure, homotetramer.

The protein localises to the cytoplasm. It catalyses the reaction L-citrulline + L-aspartate + ATP = 2-(N(omega)-L-arginino)succinate + AMP + diphosphate + H(+). The protein operates within amino-acid biosynthesis; L-arginine biosynthesis; L-arginine from L-ornithine and carbamoyl phosphate: step 2/3. This chain is Argininosuccinate synthase, found in Prochlorococcus marinus (strain MIT 9301).